Reading from the N-terminus, the 732-residue chain is MDFLSGAFHYSDSVNPSKYSPRPSDYFGTLPFRTSRFEREAADVTADYLRKWQKAVKADNPERKDLVFHGSTTTLGHFVSWAYPECIPDRVDLCTQICDFGFYWDDVTDSVNVQENAEITQDLALALLSELTLGQRLEPKLEINKIVVQMLWGVLDKDRKSGLEMIKFWKGHLDGQAESAHNNMSFEEYTKHRLSEVGARWAVEVGCWSLGINLSREKKDSVAHFVNKGLLAAALMNDYYSFNKEFDEHQRAGSMDRLQNGLGILMREYGYTETEARSILREEIRKGERAIMDGYIAWRESADSSSESHELNRYIVMIILMIGGITFWSSHASRYHRDDLITTAGDRAMIVGKFQCSMRLLDGYPPPNRWKSATSSNDISGRKRKSWSDSNGVDTHGACYTNGSSNRAKRNGTEAGHKANGHDSMDIYTAPFLKAPSEVCEAPYEYINSLQGKNMRNKFMDALNHWLCVPAPSMQIIKNIVQMLHNSSLMLDDIEDESPLRRGQPVAHTFYGISQTINSANFVYVKSVKETSRLKNPICMEIFTDELSNLHTGQSLDLYWRYHGRCPSINEYIMMVDNKTGGLFRLMLRLMEAESPAASSASLVKLLTLTGRYYQIRDDYLNLTSVEYTSKKGFCEDLDEGKFSLPLLHLLNHTRHPDRITAPLFNRASGARSLAREVKVHIIQAMDEAGTFEYAQGVLKYLHEEIMRTLDEVEADLGRNTEARILLLGLGL.

Residues Met1–Thr342 are terpene cyclase. Residues Asp105 and Asp109 each coordinate Mg(2+). Residues Asp105, Asp109, Arg193–Glu196, Phe242–Phe246, and Arg334–Tyr335 each bind substrate. Residues Asp105–Asp109 carry the DDXXD 1 motif. The short motif at Asp238–Phe246 is the NSE/DTE element. Residues Thr343–Leu732 are prenyltransferase. Disordered regions lie at residues Lys371 to Ser390 and Ala398 to Asn420. Residues Asn411 to Asn420 are compositionally biased toward basic and acidic residues. Residues Lys453, Arg456, and His485 each coordinate isopentenyl diphosphate. Residues Asp492 and Asp496 each contribute to the Mg(2+) site. A DDXXD 2 motif is present at residues Asp492–Asp496. Residue Arg501 participates in dimethylallyl diphosphate binding. Position 502 (Arg502) interacts with isopentenyl diphosphate. Dimethylallyl diphosphate-binding residues include Lys579, Thr580, Gln615, Asn622, Lys632, and Lys642.

In the N-terminal section; belongs to the terpene synthase family. The protein in the C-terminal section; belongs to the FPP/GGPP synthase family. Hexamer. The cofactor is Mg(2+).

It carries out the reaction isopentenyl diphosphate + (2E,6E)-farnesyl diphosphate = (2E,6E,10E)-geranylgeranyl diphosphate + diphosphate. The enzyme catalyses isopentenyl diphosphate + (2E,6E,10E)-geranylgeranyl diphosphate = (2E,6E,10E,14E)-geranylfarnesyl diphosphate + diphosphate. The protein operates within secondary metabolite biosynthesis; terpenoid biosynthesis. Its function is as follows. Bifunctional sesterterpene synthase that possesses both prenyl transferase and terpene cyclase activity, converting isopentenyl diphosphate and dimethylallyl diphosphate into geranylfarnesyl diphosphate (GFPP) and further converting GFPP into sesterbrasiliatriene. The polypeptide is Sesterbrasiliatriene synthase PbSS (PbSS) (Penicillium brasilianum).